The chain runs to 405 residues: Cellobiose 2-epimerase (405 aa).

The protein belongs to the cellobiose 2-epimerase family.

The catalysed reaction is D-cellobiose = beta-D-glucosyl-(1-&gt;4)-D-mannopyranose. In terms of biological role, catalyzes the reversible epimerization of cellobiose to 4-O-beta-D-glucopyranosyl-D-mannose (Glc-Man). Can also epimerize lactose to epilactose. This Eubacterium cellulosolvens protein is Cellobiose 2-epimerase (ce13).